Reading from the N-terminus, the 264-residue chain is MLLAWVHTFLLSNMLLAEAYGSGGCFWDNGHLYREDQPSPAPGLRCLNWLAAQGSRESLTEPSPGNHNYCRNPDQDPRGPWCYISSETGVPEKRPCEDVSCPETTSQAPPPSSAMELEEKSGAPGDKEAQVFPPANALPARSEAAEVQPVIGISQLVRMNSKEKKDLGTLGYVLGITMMVIILAIGAGIIVGYTYKRGKDLKEQHEKKACEREMQRITLPLSAFTNPTCETVDENTIIVHSNQTPADVQEGSTLLTGQAGTPGA.

A signal peptide spans 1 to 21; the sequence is MLLAWVHTFLLSNMLLAEAYG. Residues 22 to 170 are Extracellular-facing; that stretch reads SGGCFWDNGH…SKEKKDLGTL (149 aa). Residues 24–101 enclose the Kringle domain; sequence GCFWDNGHLY…EKRPCEDVSC (78 aa). 3 disulfides stabilise this stretch: Cys-25–Cys-101, Cys-46–Cys-82, and Cys-70–Cys-96. A disordered region spans residues 94-129; it reads RPCEDVSCPETTSQAPPPSSAMELEEKSGAPGDKEA. Residues 117-129 show a composition bias toward basic and acidic residues; sequence LEEKSGAPGDKEA. Residues 171-191 form a helical membrane-spanning segment; that stretch reads GYVLGITMMVIILAIGAGIIV. Residues 192–264 lie on the Cytoplasmic side of the membrane; sequence GYTYKRGKDL…LTGQAGTPGA (73 aa).

It localises to the cell membrane. Negative regulator of hepatic phosphatidylinositol 3-kinase (PI3K) activity. In Mus musculus (Mouse), this protein is Phosphoinositide-3-kinase-interacting protein 1 (Pik3ip1).